The primary structure comprises 451 residues: MRLTRYFMPVLRENPAEAQIVSHRLMLRAGMIKQNAAGIYSWLPLGFKVLRKLENIVHEEQIRAGHVPMLMPTMQSADLWRESGRYDAYGPEMLRIRDRQDRDMLFGPTNEEMITDIFRSHVSSYKDLPLTLYHIQWKFRDEMRPRFGVMRGREFFMKDGYNFDLTKEDALHAYNRHLVSYLRTYERMGLQAIPMRADSGPIGGDDTHEFLVLADTGESEVFYDSAVTDLTFGDRDIDYDSVEQCQGVMEEFTNLYARTDETHDQALFAAIPAERQRQARGIEVGQIFYFGTKYSDAMGAKVQGPDGKPTAVHMGSHGIGVSRLVGAIIEASHDEKGIIWPEGVTPFHCGIVNLKQGDTEADAACDALYASLRALGLDPLYDDRKERAGGKFATMDLIGLPWRITVGPRGLKNGVVELTSRKTGESSELPPEEAIEKIAKIYAPHHVSGNL.

The protein belongs to the class-II aminoacyl-tRNA synthetase family. ProS type 2 subfamily. As to quaternary structure, homodimer.

The protein localises to the cytoplasm. The enzyme catalyses tRNA(Pro) + L-proline + ATP = L-prolyl-tRNA(Pro) + AMP + diphosphate. Functionally, catalyzes the attachment of proline to tRNA(Pro) in a two-step reaction: proline is first activated by ATP to form Pro-AMP and then transferred to the acceptor end of tRNA(Pro). This Roseobacter denitrificans (strain ATCC 33942 / OCh 114) (Erythrobacter sp. (strain OCh 114)) protein is Proline--tRNA ligase.